A 595-amino-acid polypeptide reads, in one-letter code: Elongation factor 4 (595 aa).

The tr-type G domain occupies 2–183; it reads KNIRNFCIIA…AIIERISPPT (182 aa). Residues 14–19 and 130–133 contribute to the GTP site; these read DHGKST and NKID.

The protein belongs to the TRAFAC class translation factor GTPase superfamily. Classic translation factor GTPase family. LepA subfamily.

The protein localises to the cell inner membrane. It catalyses the reaction GTP + H2O = GDP + phosphate + H(+). Functionally, required for accurate and efficient protein synthesis under certain stress conditions. May act as a fidelity factor of the translation reaction, by catalyzing a one-codon backward translocation of tRNAs on improperly translocated ribosomes. Back-translocation proceeds from a post-translocation (POST) complex to a pre-translocation (PRE) complex, thus giving elongation factor G a second chance to translocate the tRNAs correctly. Binds to ribosomes in a GTP-dependent manner. The polypeptide is Elongation factor 4 (Amoebophilus asiaticus (strain 5a2)).